The primary structure comprises 523 residues: Maintenance of mitochondrial morphology protein 1 (523 aa).

The Lumenal portion of the chain corresponds to 1 to 43; sequence MAGSTSASLQTPYFPSSTQINPVRVDHTLPLPPAQPSLSFTQG. The chain crosses the membrane as a helical span at residues 44 to 64; the sequence is LLVGQLSVVLLIGAFIKFFIF. Over 65–523 the chain is Cytoplasmic; it reads GEAPPPPSRG…GSMPDTVTET (459 aa). 4 disordered regions span residues 70–118, 295–349, 420–473, and 492–523; these read PPSR…SSST, TSDQ…SKHG, RTGL…IDRG, and GGHQNQSGRDGGRGGNEQFAMPGSMPDTVTET. Polar residues-rich tracts occupy residues 74 to 96, 105 to 118, and 295 to 312; these read GLSNRTSTHPRSYSINAASTDSS, STSNILRPVPSSST, and TSDQTMSPIPTPHDTTSE. One can recognise an SMP-LTD domain in the interval 151-412; the sequence is QPESLDWFNV…EPRVQVVGLP (262 aa). The segment covering 449–467 has biased composition (gly residues); the sequence is GVSGGGGSGGGSGGGGGSM.

It belongs to the MMM1 family. In terms of assembly, homodimer. Component of the ER-mitochondria encounter structure (ERMES) or MDM complex, composed of MMM1, MDM10, MDM12 and MDM34. An MMM1 homodimer associates with one molecule of MDM12 on each side in a pairwise head-to-tail manner, and the SMP-LTD domains of MMM1 and MDM12 generate a continuous hydrophobic tunnel for phospholipid trafficking.

It localises to the endoplasmic reticulum membrane. Functionally, component of the ERMES/MDM complex, which serves as a molecular tether to connect the endoplasmic reticulum (ER) and mitochondria. Components of this complex are involved in the control of mitochondrial shape and protein biogenesis, and function in nonvesicular lipid trafficking between the ER and mitochondria. The MDM12-MMM1 subcomplex functions in the major beta-barrel assembly pathway that is responsible for biogenesis of all outer membrane beta-barrel proteins, and acts in a late step after the SAM complex. The MDM10-MDM12-MMM1 subcomplex further acts in the TOM40-specific pathway after the action of the MDM12-MMM1 complex. Essential for establishing and maintaining the structure of mitochondria and maintenance of mtDNA nucleoids. The protein is Maintenance of mitochondrial morphology protein 1 of Paracoccidioides brasiliensis (strain Pb03).